A 141-amino-acid polypeptide reads, in one-letter code: Elongation factor G, chloroplastic (141 aa).

Residues 12–141 (KDYRNIGIMA…VPRICFVNKM (130 aa)) form the tr-type G domain. GTP contacts are provided by residues 21–28 (AHIDAGKT) and 85–89 (DTPGH).

Belongs to the TRAFAC class translation factor GTPase superfamily. Classic translation factor GTPase family. EF-G/EF-2 subfamily.

The protein resides in the plastid. It localises to the chloroplast. It participates in protein biosynthesis; polypeptide chain elongation. In terms of biological role, chloroplast-localized elongation factor EF-G involved in protein synthesis in plastids. Catalyzes the GTP-dependent ribosomal translocation step during translation elongation. During this step, the ribosome changes from the pre-translocational (PRE) to the post-translocational (POST) state as the newly formed A-site-bound peptidyl-tRNA and P-site-bound deacylated tRNA move to the P and E sites, respectively. Catalyzes the coordinated movement of the two tRNA molecules, the mRNA and conformational changes in the ribosome. This Pisum sativum (Garden pea) protein is Elongation factor G, chloroplastic (fusA).